The following is a 258-amino-acid chain: 3-deoxy-manno-octulosonate cytidylyltransferase (258 aa).

This sequence belongs to the KdsB family.

The protein localises to the cytoplasm. It carries out the reaction 3-deoxy-alpha-D-manno-oct-2-ulosonate + CTP = CMP-3-deoxy-beta-D-manno-octulosonate + diphosphate. It functions in the pathway nucleotide-sugar biosynthesis; CMP-3-deoxy-D-manno-octulosonate biosynthesis; CMP-3-deoxy-D-manno-octulosonate from 3-deoxy-D-manno-octulosonate and CTP: step 1/1. Its pathway is bacterial outer membrane biogenesis; lipopolysaccharide biosynthesis. Activates KDO (a required 8-carbon sugar) for incorporation into bacterial lipopolysaccharide in Gram-negative bacteria. The polypeptide is 3-deoxy-manno-octulosonate cytidylyltransferase (Blochmanniella floridana).